Reading from the N-terminus, the 241-residue chain is LexA repressor (241 aa).

Residues 41–61 constitute a DNA-binding region (H-T-H motif); the sequence is FREIGNAAGLKSPSSVKHQLQ. Residues Ser-165 and Lys-202 each act as for autocatalytic cleavage activity in the active site.

Belongs to the peptidase S24 family. In terms of assembly, homodimer.

The catalysed reaction is Hydrolysis of Ala-|-Gly bond in repressor LexA.. Functionally, represses a number of genes involved in the response to DNA damage (SOS response), including recA and lexA. In the presence of single-stranded DNA, RecA interacts with LexA causing an autocatalytic cleavage which disrupts the DNA-binding part of LexA, leading to derepression of the SOS regulon and eventually DNA repair. The sequence is that of LexA repressor from Bifidobacterium longum subsp. infantis (strain ATCC 15697 / DSM 20088 / JCM 1222 / NCTC 11817 / S12).